The sequence spans 137 residues: DNA polymerase III subunit psi (137 aa).

This sequence belongs to the DNA polymerase III psi/HolD chain family. In terms of assembly, the DNA polymerase III holoenzyme complex contains at least 10 different subunits organized into 3 functionally essential subassemblies: the Pol III core, the beta sliding clamp processivity factor and the clamp-loading complex. The Pol III core (subunits alpha, epsilon and theta) contains the polymerase and the 3'-5' exonuclease proofreading activities. The polymerase is tethered to the template via the dimeric beta sliding clamp processivity factor. The clamp-loading complex (also called gamma complex) assembles the beta sliding clamp onto the primed template and plays a central role in the organization and communication at the replication fork. The clamp-loading complex contains delta, delta', psi and chi, and 3 copies of either or both of two different DnaX proteins, gamma and tau. The DNA replisome complex has a single clamp loader (3 tau and 1 each of delta, delta', psi and chi subunits) which binds 3 Pol III cores (1 core on the leading strand and 2 on the lagging strand) each with a beta sliding clamp dimer. Additional proteins in the replisome are other copies of gamma, psi (this protein) and chi (holC), SSB, DNA helicase and RNA primase. The clamp loader hydrolyzes ATP to assemble the beta processivity factor onto the primed template and plays a central role in the organization and communication at the replication fork. Interacts directly with the chi subunit (holC).

It catalyses the reaction DNA(n) + a 2'-deoxyribonucleoside 5'-triphosphate = DNA(n+1) + diphosphate. Its function is as follows. Part of the beta sliding clamp loading complex, which hydrolyzes ATP to load the beta clamp onto primed DNA to form the DNA replication pre-initiation complex. DNA polymerase III is a complex, multichain enzyme responsible for most of the replicative synthesis in bacteria. This DNA polymerase also exhibits 3' to 5' exonuclease activity. The protein is DNA polymerase III subunit psi of Escherichia coli (strain K12).